A 138-amino-acid polypeptide reads, in one-letter code: Basic phospholipase A2 PLA-B' (138 aa).

Positions 1 to 16 are cleaved as a signal peptide; it reads MRTLWITAVLLVGVEG. 7 cysteine pairs are disulfide-bonded: Cys-42-Cys-131, Cys-44-Cys-60, Cys-59-Cys-111, Cys-65-Cys-138, Cys-66-Cys-104, Cys-73-Cys-97, and Cys-91-Cys-102. Ca(2+) is bound by residues Tyr-43, Gly-45, and Gly-47. His-63 is an active-site residue. Residue Asp-64 coordinates Ca(2+). Asp-105 is an active-site residue.

This sequence belongs to the phospholipase A2 family. Group II subfamily. D49 sub-subfamily. Ca(2+) is required as a cofactor. Expressed by the venom gland.

Its subcellular location is the secreted. It carries out the reaction a 1,2-diacyl-sn-glycero-3-phosphocholine + H2O = a 1-acyl-sn-glycero-3-phosphocholine + a fatty acid + H(+). PLA2 catalyzes the calcium-dependent hydrolysis of the 2-acyl groups in 3-sn-phosphoglycerides. This chain is Basic phospholipase A2 PLA-B', found in Protobothrops flavoviridis (Habu).